A 927-amino-acid polypeptide reads, in one-letter code: Probable dipeptidyl-aminopeptidase B (927 aa).

Disordered stretches follow at residues 1 to 44 (MAPA…TTSI) and 58 to 101 (GHFE…KNDG). At 1–108 (MAPAPGMAPY…NDGMNRGMRR (108 aa)) the chain is on the cytoplasmic side. Basic and acidic residues-rich tracts occupy residues 19-36 (HRPE…HESE) and 58-70 (GHFE…PMKE). Residues 109–129 (TLIIVAGLLISAWVVGLFFYV) traverse the membrane as a helical; Signal-anchor for type II membrane protein segment. Topologically, residues 130 to 927 (SHKSYKPASQ…RSIQPILPIL (798 aa)) are vacuolar. 2 N-linked (GlcNAc...) asparagine glycosylation sites follow: Asn-365 and Asn-530. Ser-769 (charge relay system) is an active-site residue. A glycan (N-linked (GlcNAc...) asparagine) is linked at Asn-828. Active-site charge relay system residues include Asp-846 and His-879.

Belongs to the peptidase S9B family.

It localises to the vacuole membrane. The catalysed reaction is Release of an N-terminal dipeptide, Xaa-Yaa-|-Zaa-, from a polypeptide, preferentially when Yaa is Pro, provided Zaa is neither Pro nor hydroxyproline.. In terms of biological role, type IV dipeptidyl-peptidase which removes N-terminal dipeptides sequentially from polypeptides having unsubstituted N-termini provided that the penultimate residue is proline. In Podospora anserina (strain S / ATCC MYA-4624 / DSM 980 / FGSC 10383) (Pleurage anserina), this protein is Probable dipeptidyl-aminopeptidase B (DAPB).